Here is a 136-residue protein sequence, read N- to C-terminus: Invertebrate-type lysozyme (136 aa).

A signal peptide spans 1-11 (METVSVEEGLD). The I-type lysozyme domain occupies 14-130 (PGMVSQKCLL…WELLQKIPGC (117 aa)). 7 disulfides stabilise this stretch: C21/C98, C24/C130, C26/C33, C38/C47, C60/C80, C70/C76, and C94/C112. The Proton donor role is filled by E29. Catalysis depends on D41, which acts as the Nucleophile. Residue 53–59 (KQPYWID) participates in substrate binding. A glycan (N-linked (GlcNAc...) asparagine) is linked at N75. Substrate-binding positions include Y84, Y92, 105-107 (HNG), and K119.

Homodimer in its autoinhibited state. Active as monomer.

Its subcellular location is the secreted. It carries out the reaction Hydrolysis of (1-&gt;4)-beta-linkages between N-acetylmuramic acid and N-acetyl-D-glucosamine residues in a peptidoglycan and between N-acetyl-D-glucosamine residues in chitodextrins.. Its activity is regulated as follows. Chitinase activity is activated by high salt concentrations which cause the release of the monomer from the autoinhibited homodimer. In terms of biological role, bacteriolytic activity against Gram-positive bacterium M.luteus and thereby probably protects against bacterial infection. Also has chitinase activity. May act as an ispopeptidase, cleaving isopeptide bonds between the side chains of Lys and Gln residues in proteins or in the cross-linking peptide of peptidoglycan in bacterial cell walls. The chain is Invertebrate-type lysozyme from Ruditapes philippinarum (Japanese carpet shell).